The chain runs to 469 residues: Ribulose bisphosphate carboxylase large chain (469 aa).

The propeptide occupies 1 to 2 (MS). Pro3 carries the post-translational modification N-acetylproline. Position 14 is an N6,N6,N6-trimethyllysine (Lys14). Residues Asn123 and Thr173 each contribute to the substrate site. Lys175 (proton acceptor) is an active-site residue. Lys177 provides a ligand contact to substrate. Mg(2+) is bound by residues Lys201, Asp203, and Glu204. Position 201 is an N6-carboxylysine (Lys201). His294 acts as the Proton acceptor in catalysis. 3 residues coordinate substrate: Arg295, His327, and Ser379.

It belongs to the RuBisCO large chain family. Type I subfamily. In terms of assembly, heterohexadecamer of 8 large chains and 8 small chains; disulfide-linked. The disulfide link is formed within the large subunit homodimers. The cofactor is Mg(2+). The disulfide bond which can form in the large chain dimeric partners within the hexadecamer appears to be associated with oxidative stress and protein turnover.

It is found in the plastid. The protein localises to the chloroplast. It catalyses the reaction 2 (2R)-3-phosphoglycerate + 2 H(+) = D-ribulose 1,5-bisphosphate + CO2 + H2O. It carries out the reaction D-ribulose 1,5-bisphosphate + O2 = 2-phosphoglycolate + (2R)-3-phosphoglycerate + 2 H(+). Functionally, ruBisCO catalyzes two reactions: the carboxylation of D-ribulose 1,5-bisphosphate, the primary event in carbon dioxide fixation, as well as the oxidative fragmentation of the pentose substrate in the photorespiration process. Both reactions occur simultaneously and in competition at the same active site. The sequence is that of Ribulose bisphosphate carboxylase large chain from Atriplex patula (Common orache).